The following is a 403-amino-acid chain: Protein WVD2-like 6 (403 aa).

2 disordered regions span residues 1 to 179 and 254 to 403; these read MDSE…ALPN and LKKI…AVEP. Over residues 25–56 the composition is skewed to polar residues; the sequence is GDSSNGNGGTSENLECCSTQHPMEASEGTQNE. Residues 103 to 118 are compositionally biased toward low complexity; sequence SVAPNVKPVKSPKSKS. S113 carries the phosphoserine modification. 3 stretches are compositionally biased toward basic and acidic residues: residues 120–132, 139–153, and 162–171; these read NGRE…HGNH, GTRD…RKQV, and QYPKEDDGKP. Residues 263-273 are compositionally biased toward basic residues; it reads KSPKLGRKKTN. Positions 336 to 348 are enriched in low complexity; it reads KVAPAKAVTASTK. The segment covering 385-394 has biased composition (basic and acidic residues); it reads VNEDRNESHM.

It belongs to the TPX2 family. Expressed in seedlings.

It is found in the cytoplasm. It localises to the cytoskeleton. In terms of biological role, microtubule-associated protein (MAP) that regulates the orientation of interphase cortical microtubules. This Arabidopsis thaliana (Mouse-ear cress) protein is Protein WVD2-like 6.